Here is a 755-residue protein sequence, read N- to C-terminus: Biodegradative arginine decarboxylase (755 aa).

K386 carries the post-translational modification N6-(pyridoxal phosphate)lysine.

It belongs to the Orn/Lys/Arg decarboxylase class-I family. Homodecamer. The basic unit is a homodimer, organized into a ring of giving a pentamer of five homodimers. Pyridoxal 5'-phosphate is required as a cofactor.

The protein localises to the cytoplasm. The catalysed reaction is L-arginine + H(+) = agmatine + CO2. Its activity is regulated as follows. Homodimers are probably inactive, their assembly into a homodecamer at low pH requires neutralization of negatively charged residues. This uses cytoplasmic protons, contributing pH regulation and stabilizes the homodecamer. Component of the acid-resistance (AR) system allowing enteric pathogens to survive the acidic environment in the stomach. ADC can be found in two forms: biodegradative (this enzyme) and biosynthetic (speA). The biodegradative form plays a role in regulating pH by consuming proteins. Converts arginine imported by AdiC to agmatine which is then exported by AdiC. The chain is Biodegradative arginine decarboxylase (adiA) from Escherichia coli (strain K12).